A 454-amino-acid chain; its full sequence is MSLKVIILAAGKGTRMRSNLPKVLQPLAQKPLLSHVISTAQKLTNEPIITVIGHGAQRVVDVIGTDGIQYAEQLEQLGTGHAVVQGNPHYNDDDTVLILYGDVPLTQQNTLTDLLNLVDDIHPLALLTITLDNPSGYGRIVRNQHHLVQAIVEEKDASFEQKAVQEVNTGMMAVKGYYLKKWLGQLSNSNAQGEYYLTDIIEMCVQDGFEVHTTQPASEMEVLGVNNKSQLQSLERQYQAQLAEELMEQGVTVLDASRIDIRGDLTVGQDVTLDVNVIFEGTVVLEDHVSIGPNCVIKNAVIKSGTEIKSFSHIEDAQIGQNCEIGPYARLRPGTELSTGVKIGNFVETKKVQIGSGSKVNHLSYIGDTEMGAGVNIGAGTITCNYDGVNKHQTVIGDNVFIGSDSQLVAPVTIESDATIGAGSTITKDAPAGTLTLSRSKQLSIKGWQKPTKN.

Residues 1 to 228 (MSLKVIILAA…EMEVLGVNNK (228 aa)) are pyrophosphorylase. UDP-N-acetyl-alpha-D-glucosamine contacts are provided by residues 8–11 (LAAG), lysine 22, glutamine 73, 78–79 (GT), 100–102 (YGD), glycine 138, glutamate 153, asparagine 168, and asparagine 226. A Mg(2+)-binding site is contributed by aspartate 102. Mg(2+) is bound at residue asparagine 226. The interval 229–249 (SQLQSLERQYQAQLAEELMEQ) is linker. Residues 250-454 (GVTVLDASRI…IKGWQKPTKN (205 aa)) are N-acetyltransferase. Residues arginine 332 and lysine 350 each contribute to the UDP-N-acetyl-alpha-D-glucosamine site. Catalysis depends on histidine 362, which acts as the Proton acceptor. UDP-N-acetyl-alpha-D-glucosamine contacts are provided by tyrosine 365 and asparagine 376. Residues alanine 379, 385–386 (NY), serine 404, alanine 422, and arginine 439 each bind acetyl-CoA.

In the N-terminal section; belongs to the N-acetylglucosamine-1-phosphate uridyltransferase family. The protein in the C-terminal section; belongs to the transferase hexapeptide repeat family. Homotrimer. Mg(2+) is required as a cofactor.

The protein localises to the cytoplasm. The enzyme catalyses alpha-D-glucosamine 1-phosphate + acetyl-CoA = N-acetyl-alpha-D-glucosamine 1-phosphate + CoA + H(+). The catalysed reaction is N-acetyl-alpha-D-glucosamine 1-phosphate + UTP + H(+) = UDP-N-acetyl-alpha-D-glucosamine + diphosphate. Its pathway is nucleotide-sugar biosynthesis; UDP-N-acetyl-alpha-D-glucosamine biosynthesis; N-acetyl-alpha-D-glucosamine 1-phosphate from alpha-D-glucosamine 6-phosphate (route II): step 2/2. It functions in the pathway nucleotide-sugar biosynthesis; UDP-N-acetyl-alpha-D-glucosamine biosynthesis; UDP-N-acetyl-alpha-D-glucosamine from N-acetyl-alpha-D-glucosamine 1-phosphate: step 1/1. The protein operates within bacterial outer membrane biogenesis; LPS lipid A biosynthesis. Its function is as follows. Catalyzes the last two sequential reactions in the de novo biosynthetic pathway for UDP-N-acetylglucosamine (UDP-GlcNAc). The C-terminal domain catalyzes the transfer of acetyl group from acetyl coenzyme A to glucosamine-1-phosphate (GlcN-1-P) to produce N-acetylglucosamine-1-phosphate (GlcNAc-1-P), which is converted into UDP-GlcNAc by the transfer of uridine 5-monophosphate (from uridine 5-triphosphate), a reaction catalyzed by the N-terminal domain. The chain is Bifunctional protein GlmU from Hydrogenovibrio crunogenus (strain DSM 25203 / XCL-2) (Thiomicrospira crunogena).